We begin with the raw amino-acid sequence, 85 residues long: UPF0291 protein SPH_1589 (85 aa).

Residues T62–S85 form a disordered region.

This sequence belongs to the UPF0291 family.

The protein resides in the cytoplasm. The chain is UPF0291 protein SPH_1589 from Streptococcus pneumoniae (strain Hungary19A-6).